We begin with the raw amino-acid sequence, 410 residues long: Argininosuccinate synthase (410 aa).

Residue 10–18 coordinates ATP; the sequence is AYSGGLDTS. L-citrulline-binding residues include Y88 and S93. Residue G118 coordinates ATP. L-aspartate contacts are provided by T120, N124, and D125. N124 contributes to the L-citrulline binding site. Residues R128, S177, S186, E262, and Y274 each coordinate L-citrulline.

Belongs to the argininosuccinate synthase family. Type 1 subfamily. As to quaternary structure, homotetramer.

It is found in the cytoplasm. The catalysed reaction is L-citrulline + L-aspartate + ATP = 2-(N(omega)-L-arginino)succinate + AMP + diphosphate + H(+). It functions in the pathway amino-acid biosynthesis; L-arginine biosynthesis; L-arginine from L-ornithine and carbamoyl phosphate: step 2/3. The sequence is that of Argininosuccinate synthase from Caldanaerobacter subterraneus subsp. tengcongensis (strain DSM 15242 / JCM 11007 / NBRC 100824 / MB4) (Thermoanaerobacter tengcongensis).